We begin with the raw amino-acid sequence, 347 residues long: Phosphoribosylformylglycinamidine cyclo-ligase (347 aa).

This sequence belongs to the AIR synthase family.

Its subcellular location is the cytoplasm. It carries out the reaction 2-formamido-N(1)-(5-O-phospho-beta-D-ribosyl)acetamidine + ATP = 5-amino-1-(5-phospho-beta-D-ribosyl)imidazole + ADP + phosphate + H(+). It functions in the pathway purine metabolism; IMP biosynthesis via de novo pathway; 5-amino-1-(5-phospho-D-ribosyl)imidazole from N(2)-formyl-N(1)-(5-phospho-D-ribosyl)glycinamide: step 2/2. In Yersinia pestis, this protein is Phosphoribosylformylglycinamidine cyclo-ligase.